The primary structure comprises 300 residues: UDP-3-O-acyl-N-acetylglucosamine deacetylase (300 aa).

3 residues coordinate Zn(2+): histidine 78, histidine 237, and aspartate 241. The active-site Proton donor is the histidine 264.

The protein belongs to the LpxC family. It depends on Zn(2+) as a cofactor.

The catalysed reaction is a UDP-3-O-[(3R)-3-hydroxyacyl]-N-acetyl-alpha-D-glucosamine + H2O = a UDP-3-O-[(3R)-3-hydroxyacyl]-alpha-D-glucosamine + acetate. The protein operates within glycolipid biosynthesis; lipid IV(A) biosynthesis; lipid IV(A) from (3R)-3-hydroxytetradecanoyl-[acyl-carrier-protein] and UDP-N-acetyl-alpha-D-glucosamine: step 2/6. In terms of biological role, catalyzes the hydrolysis of UDP-3-O-myristoyl-N-acetylglucosamine to form UDP-3-O-myristoylglucosamine and acetate, the committed step in lipid A biosynthesis. This is UDP-3-O-acyl-N-acetylglucosamine deacetylase from Acinetobacter baumannii (strain AB307-0294).